The sequence spans 1683 residues: MSSRRKRAPPVRVDEEKRQQLHWNMHEDRRNEPIIISDDDEQPCPGSDTSSAHYIILSDSLKEEVAHRDKKRCSKVVSFSKPIEKEETVGIFSPLSVKLNIVISPYHFDNSWKAFLGELTLQLLPAQSLIENFSERSITLMSSESSNQFLIYVHSKGEDVEKQKKEPMSICDKGILVESSFSGEMLEDLGWLQKKRRIKLYQKPEGNHIIKVGIYLLEAGLAKLDFLSDANSRMKKFNQLMKKVMEKLHNSIIPDVLEEDEDDPESEPEGQDIDELYHFVKQTHQQETQSIQVDVQHPALIPVLRPYQREAVNWMLQQECFRSSPATESALHFLWREIVTSEGLKLYYNPYTGCIIREYPNSGPQLLGGILADEMGLGKTVEVLALILTHTRQDVKQDALTLPEGKVVNYFIPSHYFGGKLKKTEIQNIEFEPKEKVQCPPTRVMILTAVKEMNGKKGVSILSIYKYVSSIYRYDVQRNRSLLKRMLKCLIFEGLVKQIKGHGFSGTFTLGKNYKEEDICDKTKKQAVGSPRKIQKETRKSGNKDTDSEYLPSDTSDDDDDPYYYYYKSRRNRSKLRKKLVPSTKKGKSQPFINPDSQGHCPATSDSGITDVAMSKSTCISEFNQEHETEDCAESLNHADSDVPPSNTMSPFNTSDYRFECICGELDQIDRKPRVQCLKCHLWQHAKCVNYDEKNLKIKPFYCPHCLVAMEPVSTRATLIISPSSICHQWVDEINRHVRSSSLRVLVYQGVKKDGFLQPHFLAEQDIVIITYDVLRSELNYVDIPHSNSEDGRRLRNQKRYMAIPSPLVAVEWWRICLDEAQMVECPTVKAAEMAQRLSGINRWCISGTPVQRGLEDLFGLVVFLGIEPYCVKHWWVRLLYRPYCKKNPQHLYSFIAKILWRSAKKDVIDQIQIPPQTEEIHWLHFSPVERHFYHRQHEVCCQDVVVKLRKISDWALKLSSLDRRTVTSILYPLLRLRQACCHPQAVRGEFLPLQKSTMTMEELLTSLQKKCGTECEEAHRQLVCALNGLAGIHIIKGEYALAAELYREVLRSSEEHKGKLKTDSLQRLHATHNLMELLIARHPGIPPTLRDGRLEEEAKQLREHYMSKCNTEVAEAQQALYPVQQTIHELQRKIHSNSPWWLNVIHRAIEFTIDEELVQRVRNEITSNYKQQTGKLSMSEKFRDCRGLQFLLTTQMEELNKCQKLVREAVKNLEGPPSRNVIESATVCHLRPARLPLNCCVFCKADELFTEYESKLFSNTVKGQTAIFEEMIEDEEGLVDDRAPTTTRGLWAISETERSMKAILSFAKSHRFDVEFVDEGSTSMDLFEAWKKEYKLLHEYWMALRNRVSAVDELAMATERLRVRDPREPKPNPPVLHIIEPHEVEQNRIKLLNDKAVATSQLQKKLGQLLYLTNLEKSQDKTSGGVNPEPCPICARQLGKQWAVLTCGHCFCNECISIIIEQYSVGSHRSSIKCAICRQTTSHKEISYVFTSEKANQEEDIPVKGSHSTKVEAVVRTLMKIQLRDPGAKALVFSTWQDVLDIISKALTDNNMEFAQISRVKTFQENLSAFKRDPQINILLLPLHTGSNGLTIIEATHVLLVEPILNPAHELQAIGRVHRIGQTKPTIVHRFLIKATIEERMQAMLKTAERSHTNSSAKHSEASVLTVADLADLFTKETEELE.

The interval 1–43 is disordered; it reads MSSRRKRAPPVRVDEEKRQQLHWNMHEDRRNEPIIISDDDEQP. Basic and acidic residues predominate over residues 12–32; that stretch reads RVDEEKRQQLHWNMHEDRRNE. Phosphoserine is present on Ser-266. Residues 307–389 form the Helicase ATP-binding; first part domain; that stretch reads YQREAVNWML…TVEVLALILT (83 aa). Residue 373–380 participates in ATP binding; the sequence is DEMGLGKT. In terms of domain architecture, H15 spans 438–512; it reads QCPPTRVMIL…GFSGTFTLGK (75 aa). Residues 525 to 607 are disordered; it reads KQAVGSPRKI…QGHCPATSDS (83 aa). Over residues 534 to 547 the composition is skewed to basic and acidic residues; the sequence is IQKETRKSGNKDTD. Basic residues predominate over residues 568 to 588; that stretch reads KSRRNRSKLRKKLVPSTKKGK. Ser-635 is subject to Phosphoserine. Residues 658–709 form a PHD-type zinc finger; that stretch reads RFECICGELDQIDRKPRVQCLKCHLWQHAKCVNYDEKNLKIKPFYCPHCLVA. One can recognise a Helicase ATP-binding; second part domain in the interval 710–868; the sequence is MEPVSTRATL…FGLVVFLGIE (159 aa). Residues 819-822 carry the DEAQ box motif; it reads DEAQ. The segment at 1432 to 1479 adopts an RING-type zinc-finger fold; sequence CPICARQLGKQWAVLTCGHCFCNECISIIIEQYSVGSHRSSIKCAICR. The 159-residue stretch at 1514 to 1672 folds into the Helicase C-terminal domain; the sequence is AVVRTLMKIQ…ASVLTVADLA (159 aa).

This sequence belongs to the SNF2/RAD54 helicase family. Homodimer. Interacts with HLTF, PCNA, UBE2N and RAD18. As to expression, broadly expressed.

It catalyses the reaction S-ubiquitinyl-[E2 ubiquitin-conjugating enzyme]-L-cysteine + [acceptor protein]-L-lysine = [E2 ubiquitin-conjugating enzyme]-L-cysteine + N(6)-ubiquitinyl-[acceptor protein]-L-lysine.. Its pathway is protein modification; protein ubiquitination. E3 ubiquitin-protein ligase involved in DNA repair. Upon genotoxic stress, accepts ubiquitin from the UBE2N-UBE2V2 E2 complex and transfers it to 'Lys-164' of PCNA which had been monoubiquitinated by UBE2A/B-RAD18, promoting the formation of non-canonical poly-ubiquitin chains linked through 'Lys-63'. In Homo sapiens (Human), this protein is E3 ubiquitin-protein ligase SHPRH (SHPRH).